The sequence spans 27 residues: Phospholipase A2 2 (27 aa).

The interval 1 to 27 (FMKVIDPGTKWCGPGNKAADDTDNGKN) is disordered. Residues W11, G13, and G15 each contribute to the Ca(2+) site. A compositionally biased stretch (basic and acidic residues) spans 18–27 (AADDTDNGKN).

Belongs to the phospholipase A2 family. The cofactor is Ca(2+). As to expression, expressed by the venom gland.

It localises to the secreted. It carries out the reaction a 1,2-diacyl-sn-glycero-3-phosphocholine + H2O = a 1-acyl-sn-glycero-3-phosphocholine + a fatty acid + H(+). Functionally, PLA2 catalyzes the calcium-dependent hydrolysis of the 2-acyl groups in 3-sn-phosphoglycerides. This chain is Phospholipase A2 2, found in Opisthacanthus cayaporum (South American scorpion).